A 479-amino-acid chain; its full sequence is Gamma-aminobutyric acid receptor subunit rho-1 (479 aa).

The first 21 residues, 1–21 (MLAVPNMRFGIFLLWWGWVLA), serve as a signal peptide directing secretion. Over 22-280 (TESRMHWPGR…LYINFTLRRH (259 aa)) the chain is Extracellular. Positions 32-55 (EVHEMSKKGRPQRQRREVHEDAHK) are disordered. The segment covering 45–55 (QRREVHEDAHK) has biased composition (basic and acidic residues). Residue arginine 125 coordinates 4-aminobutanoate. Asparagine 140 carries an N-linked (GlcNAc...) asparagine glycan. Serine 189 is a 4-aminobutanoate binding site. Cysteine 198 and cysteine 212 are oxidised to a cystine. Residue glutamate 217 coordinates 4-aminobutanoate. Residues asparagine 234 and asparagine 274 are each glycosylated (N-linked (GlcNAc...) asparagine). The helical transmembrane segment at 281-301 (IFFFLLQTYFPATLMVMLSWV) threads the bilayer. The Cytoplasmic portion of the chain corresponds to 302-313 (SFWIDRRAVPAR). A helical transmembrane segment spans residues 314–334 (VPLGITTVLTMSTIITGVNAS). Residues 335–345 (MPRVSYIKAVD) lie on the Extracellular side of the membrane. Residues 346–366 (IYLWVSFVFVFLSVLEYAAVN) traverse the membrane as a helical segment. Over 367 to 457 (YLTTVQERKE…MRIDTHAIDK (91 aa)) the chain is Cytoplasmic. The chain crosses the membrane as a helical span at residues 458–478 (YSRIIFPAAYILFNLIYWSIF). A topological domain (extracellular) is located at residue serine 479.

Belongs to the ligand-gated ion channel (TC 1.A.9) family. Gamma-aminobutyric acid receptor (TC 1.A.9.5) subfamily. GABRR1 sub-subfamily. In terms of assembly, three rho subunits (rho-1/GBRR1, rho-2/GBRR2 and rho-3/GBRR3) coassemble either to form functional homopentamers or heteropentamers. Rho-1/GBRR1 subunits can also associate with alpha-1/GBRA1 subunits to form a functional GABAAR. Interacts with SQSTM1. As to expression, highly expressed in the retina. Expressed in a lesser extent in brain, lung and thymus.

It is found in the postsynaptic cell membrane. Its subcellular location is the cell membrane. The catalysed reaction is chloride(in) = chloride(out). With respect to regulation, inhibited by TPMPA, a rho-specific antagonist, when forming a homopentamer. In contrast with other GABAARs, rho-1 GABAAR is not inhibited by bicuculline, when forming a homopentamer. Functionally, rho subunit of the pentameric ligand-gated chloride channels responsible for mediating the effects of gamma-aminobutyric acid (GABA), the major inhibitory neurotransmitter in the brain. Rho-containing GABA-gated chloride channels are a subclass of GABA(A) receptors (GABAARs) entirely composed of rho subunits, where GABA molecules bind at the rho intersubunit interfaces. When activated by GABA, rho-GABAARs selectively allow the flow of chloride anions across the cell membrane down their electrochemical gradient. Rho-1 subunits are primarily expressed in retina where rho-1-containing GABAARs may play a role in retinal neurotransmission. Rho-1 GABAARs are also involved in neuronal tonic (extrasynaptic) and phasic (synaptic) transmission in the Purkinje neurons of the cerebellum. Rho-1 GABAARs may also contribute to the regulation of glial development in the cerebellum by controlling extrasynaptic transmission. The polypeptide is Gamma-aminobutyric acid receptor subunit rho-1 (Homo sapiens (Human)).